The primary structure comprises 274 residues: Dermonecrotic toxin SdSicTox-betaIIB2ii (274 aa).

Residue His-5 is part of the active site. Mg(2+)-binding residues include Glu-25 and Asp-27. His-41 serves as the catalytic Nucleophile. Intrachain disulfides connect Cys-45–Cys-51 and Cys-47–Cys-190. Residue Asp-85 coordinates Mg(2+).

Belongs to the arthropod phospholipase D family. Class II subfamily. Requires Mg(2+) as cofactor. Expressed by the venom gland.

It is found in the secreted. The catalysed reaction is an N-(acyl)-sphingosylphosphocholine = an N-(acyl)-sphingosyl-1,3-cyclic phosphate + choline. The enzyme catalyses an N-(acyl)-sphingosylphosphoethanolamine = an N-(acyl)-sphingosyl-1,3-cyclic phosphate + ethanolamine. It carries out the reaction a 1-acyl-sn-glycero-3-phosphocholine = a 1-acyl-sn-glycero-2,3-cyclic phosphate + choline. It catalyses the reaction a 1-acyl-sn-glycero-3-phosphoethanolamine = a 1-acyl-sn-glycero-2,3-cyclic phosphate + ethanolamine. Functionally, dermonecrotic toxins cleave the phosphodiester linkage between the phosphate and headgroup of certain phospholipids (sphingolipid and lysolipid substrates), forming an alcohol (often choline) and a cyclic phosphate. This toxin acts on sphingomyelin (SM). It may also act on ceramide phosphoethanolamine (CPE), lysophosphatidylcholine (LPC) and lysophosphatidylethanolamine (LPE), but not on lysophosphatidylserine (LPS), and lysophosphatidylglycerol (LPG). It acts by transphosphatidylation, releasing exclusively cyclic phosphate products as second products. Induces dermonecrosis, hemolysis, increased vascular permeability, edema, inflammatory response, and platelet aggregation. The sequence is that of Dermonecrotic toxin SdSicTox-betaIIB2ii from Sicarius cf. damarensis (strain GJB-2008) (Six-eyed sand spider).